We begin with the raw amino-acid sequence, 169 residues long: MAESSNKPFRGPVRANDRKANRRGAARLAAVQALYQMDIAGAGINDVLAEFESHWLGSEVEGEQYLPAEAAFFRDIVSGVVRDQTKIDPVLDTALERGWPLQRIEAILRAVLRAGAYELERRKDVPAKVVVSEYVDIAHAFVERDETGMVNAVLEQLARQYRADEMGPK.

A disordered region spans residues 1–20 (MAESSNKPFRGPVRANDRKA).

It belongs to the NusB family.

Functionally, involved in transcription antitermination. Required for transcription of ribosomal RNA (rRNA) genes. Binds specifically to the boxA antiterminator sequence of the ribosomal RNA (rrn) operons. The polypeptide is Transcription antitermination protein NusB (Bradyrhizobium sp. (strain BTAi1 / ATCC BAA-1182)).